The following is a 492-amino-acid chain: GTPase Obg (492 aa).

The 158-residue stretch at 2–159 (PRFVDRVVIH…RELTLELKTV (158 aa)) folds into the Obg domain. The region spanning 160 to 340 (ADVGLIGFPS…LIFGLWQMIS (181 aa)) is the OBG-type G domain. Residues 166 to 173 (GFPSAGKS), 191 to 195 (FTTLV), 212 to 215 (DVPG), 292 to 295 (NKID), and 321 to 323 (STV) each bind GTP. 2 residues coordinate Mg(2+): Ser173 and Thr193. An OCT domain is found at 358–438 (PVPVDDSGFR…IGDMTFDWEP (81 aa)). Positions 441–492 (PAGQQVVLSGRGTDARLERTERVGAAERKAARRQRRTGDDAERGTTERGENT) are disordered. Basic and acidic residues-rich tracts occupy residues 453 to 469 (TDARLERTERVGAAERK) and 476 to 492 (RTGDDAERGTTERGENT).

This sequence belongs to the TRAFAC class OBG-HflX-like GTPase superfamily. OBG GTPase family. Monomer. It depends on Mg(2+) as a cofactor.

It is found in the cytoplasm. Functionally, an essential GTPase which binds GTP, GDP and possibly (p)ppGpp with moderate affinity, with high nucleotide exchange rates and a fairly low GTP hydrolysis rate. Plays a role in control of the cell cycle, stress response, ribosome biogenesis and in those bacteria that undergo differentiation, in morphogenesis control. This chain is GTPase Obg, found in Mycolicibacterium paratuberculosis (strain ATCC BAA-968 / K-10) (Mycobacterium paratuberculosis).